We begin with the raw amino-acid sequence, 335 residues long: tRNA N6-adenosine threonylcarbamoyltransferase (335 aa).

Histidine 110 and histidine 114 together coordinate Fe cation. Substrate contacts are provided by residues 132–136 (LVSGG), aspartate 165, glycine 178, and asparagine 271. Position 299 (aspartate 299) interacts with Fe cation.

This sequence belongs to the KAE1 / TsaD family. Requires Fe(2+) as cofactor.

The protein resides in the cytoplasm. It carries out the reaction L-threonylcarbamoyladenylate + adenosine(37) in tRNA = N(6)-L-threonylcarbamoyladenosine(37) in tRNA + AMP + H(+). Required for the formation of a threonylcarbamoyl group on adenosine at position 37 (t(6)A37) in tRNAs that read codons beginning with adenine. Is involved in the transfer of the threonylcarbamoyl moiety of threonylcarbamoyl-AMP (TC-AMP) to the N6 group of A37, together with TsaE and TsaB. TsaD likely plays a direct catalytic role in this reaction. The polypeptide is tRNA N6-adenosine threonylcarbamoyltransferase (Campylobacter jejuni subsp. jejuni serotype O:23/36 (strain 81-176)).